The following is a 122-amino-acid chain: Ribosome-binding factor A (122 aa).

It belongs to the RbfA family. Monomer. Binds 30S ribosomal subunits, but not 50S ribosomal subunits or 70S ribosomes.

It is found in the cytoplasm. Functionally, one of several proteins that assist in the late maturation steps of the functional core of the 30S ribosomal subunit. Associates with free 30S ribosomal subunits (but not with 30S subunits that are part of 70S ribosomes or polysomes). Required for efficient processing of 16S rRNA. May interact with the 5'-terminal helix region of 16S rRNA. This chain is Ribosome-binding factor A, found in Burkholderia mallei (strain NCTC 10229).